A 279-amino-acid chain; its full sequence is Undecaprenyl-diphosphatase (279 aa).

The next 7 membrane-spanning stretches (helical) occupy residues 10 to 30, 48 to 68, 96 to 116, 128 to 148, 203 to 223, 229 to 249, and 259 to 279; these read FICFKSFFLGIIQGFTEFLPI, LGVSFSASIQLGSAVAIIYYF, LFIYIFVASIPILVFGLLIKL, GLFSIAITSIVMSLLLALSEI, SFLVGIPAVSISGLVELFSLF, IDIIPIIIGIISSFFSSIFAI, and NNTLVFVYYRLAFGIFILTTL.

The protein belongs to the UppP family.

Its subcellular location is the cell inner membrane. The enzyme catalyses di-trans,octa-cis-undecaprenyl diphosphate + H2O = di-trans,octa-cis-undecaprenyl phosphate + phosphate + H(+). Catalyzes the dephosphorylation of undecaprenyl diphosphate (UPP). Confers resistance to bacitracin. In Prochlorococcus marinus (strain NATL1A), this protein is Undecaprenyl-diphosphatase.